The sequence spans 87 residues: Large ribosomal subunit protein eL31 (87 aa).

It belongs to the eukaryotic ribosomal protein eL31 family.

The protein is Large ribosomal subunit protein eL31 (rpl31e) of Methanocaldococcus jannaschii (strain ATCC 43067 / DSM 2661 / JAL-1 / JCM 10045 / NBRC 100440) (Methanococcus jannaschii).